The sequence spans 237 residues: Ribonuclease PH (237 aa).

Residues Arg86 and 124 to 126 (GTR) contribute to the phosphate site.

This sequence belongs to the RNase PH family. As to quaternary structure, homohexameric ring arranged as a trimer of dimers.

It catalyses the reaction tRNA(n+1) + phosphate = tRNA(n) + a ribonucleoside 5'-diphosphate. Functionally, phosphorolytic 3'-5' exoribonuclease that plays an important role in tRNA 3'-end maturation. Removes nucleotide residues following the 3'-CCA terminus of tRNAs; can also add nucleotides to the ends of RNA molecules by using nucleoside diphosphates as substrates, but this may not be physiologically important. Probably plays a role in initiation of 16S rRNA degradation (leading to ribosome degradation) during starvation. The polypeptide is Ribonuclease PH (Bradyrhizobium sp. (strain BTAi1 / ATCC BAA-1182)).